The sequence spans 344 residues: MREQLTALKHEALDKAEVAKSEQDIQAIRVAYLGKKGPITEVLRGMGKLSAEERPIIGALANEVRDEIKNKLDEKSKKLQEAAIKQQLEQESIDVTLPGRPALQGAIHPLTAVVTEIEEIFLGLGFSIGEGPEIETDYYNFEAMNLPKDHPARDMQDSFYVTEDLLLRTQTSPVQARTMEKFAGKGPVKVVVPGKVFRRDDDDATHSHQFMQVEGLYVDKKVRMSDLKGVLETFAKQFFGQDRSIRLRPSFFPFTEPSVEVDVSCGICSGKGCRVCKQSGWIEVLGAGMVHPRVLEMSGFDANEYSGFAFGMGVERLAMLKYDIDDIRQFYANDLRFLMQFKDV.

Glutamate 256 serves as a coordination point for Mg(2+).

Belongs to the class-II aminoacyl-tRNA synthetase family. Phe-tRNA synthetase alpha subunit type 1 subfamily. Tetramer of two alpha and two beta subunits. Mg(2+) is required as a cofactor.

It is found in the cytoplasm. It catalyses the reaction tRNA(Phe) + L-phenylalanine + ATP = L-phenylalanyl-tRNA(Phe) + AMP + diphosphate + H(+). This chain is Phenylalanine--tRNA ligase alpha subunit, found in Shouchella clausii (strain KSM-K16) (Alkalihalobacillus clausii).